The chain runs to 379 residues: 2-nitroimidazole nitrohydrolase (379 aa).

The active-site Amidino-cysteine intermediate is Cys357.

The protein belongs to the arginine deiminase family.

The enzyme catalyses 2-nitroimidazole + H2O = 1,3-dihydro-2H-imidazol-2-one + nitrite + H(+). Involved in the biodegradation of 2-Nitroimidazole (2NI) which is a natural antibiotic and an analog of the synthetic nitroimidazoles used for treatment of tuberculosis, Chagas disease (also called American Trypanosomiasis) and cancer. Catalyzes the hydrolytic denitration of 2NI to produce imidazol-2-one and nitrite. It is also active against the 2NI synthetic derivative benznidazole. NnhA confers drug resistance to 2NI. This Mycobacterium sp. (strain JS330) protein is 2-nitroimidazole nitrohydrolase (nnhA).